The chain runs to 321 residues: MFRAQSFLPVLALVLRVAAHGYVDQVTIGGQVYTGYQPYQDPYESPVPQRIERAIPGNGPVEDLTLLDIQCNGSGGSGTKPAALIASAAAGDEIAFHWTTWPSSHVGPVITYMGKVPSNTDITSYSPTGSDVIWFKIDEAGYENGKWAATDIMSAQNSTWTVTIPKALAPGQYIVRHEIIALHQAETYPGAQFYPDCFQVQVTGPGTETPTSQALVSFPGGYTPTTPGITFNVYSGSITSYPIPGPPVWTSNEAFSGGSSSSAAASSTAVASSTADSSSSAAATQSSSAAPSSSAIGTSTASSAAASGTAIVDANTCMNSA.

The first 21 residues, 1–21 (MFRAQSFLPVLALVLRVAAHG), serve as a signal peptide directing secretion. His20 lines the Cu(2+) pocket. Cysteines 71 and 197 form a disulfide. Asn72 carries an N-linked (GlcNAc...) asparagine glycan. Position 105 (His105) interacts with Cu(2+). Residue Asn157 is glycosylated (N-linked (GlcNAc...) asparagine). Residues His183 and Gln192 each coordinate O2. Cu(2+) is bound at residue Tyr194. The tract at residues 278–306 (SSSAAATQSSSAAPSSSAIGTSTASSAAA) is disordered. Ser293 is lipidated: GPI-anchor amidated serine. Positions 294–321 (SAIGTSTASSAAASGTAIVDANTCMNSA) are cleaved as a propeptide — removed in mature form.

Belongs to the polysaccharide monooxygenase AA9 family. It depends on Cu(2+) as a cofactor.

It localises to the cell membrane. The enzyme catalyses [(1-&gt;4)-beta-D-glucosyl]n+m + reduced acceptor + O2 = 4-dehydro-beta-D-glucosyl-[(1-&gt;4)-beta-D-glucosyl]n-1 + [(1-&gt;4)-beta-D-glucosyl]m + acceptor + H2O.. Functionally, lytic polysaccharide monooxygenase (LPMO) that depolymerizes crystalline and amorphous polysaccharides via the oxidation of scissile alpha- or beta-(1-4)-glycosidic bonds, yielding C1 or C4 oxidation products. Catalysis by LPMOs requires the reduction of the active-site copper from Cu(II) to Cu(I) by a reducing agent and H(2)O(2) or O(2) as a cosubstrate. Has broad specificity, cleaving at any position along the beta-glucan backbone of xyloglucan, regardless of substitutions. Shows minor activity on glucomannan. This chain is AA9 family lytic polysaccharide monooxygenase A, found in Gloeophyllum trabeum (strain ATCC 11539 / FP-39264 / Madison 617) (Brown rot fungus).